Here is a 708-residue protein sequence, read N- to C-terminus: Caprin-1 (708 aa).

2 stretches are compositionally biased toward low complexity: residues 1–15 and 22–37; these read MPSATSHSGSGSKSS and GSSGNEAGAGAAAPAS. The segment at 1-48 is disordered; it reads MPSATSHSGSGSKSSGPPPPSGSSGNEAGAGAAAPASQHPMTGTGAVQ. The residue at position 2 (proline 2) is an N-acetylproline. Serine 10 carries the post-translational modification Phosphoserine. A coiled-coil region spans residues 58–92; sequence VIDKKLRNLEKKKGKLDDYQERMNKGERLNQDQLD. Phosphoserine is present on serine 113. Residues 123-151 adopt a coiled-coil conformation; the sequence is KTIKKTARREQLMREEAEQKRLKTVLELQ. An Omega-N-methylarginine modification is found at arginine 163. Residues 258–287 form a disordered region; the sequence is EEAASAPTVEDQAAEAEPEPVEEYTEQNEV. Acidic residues predominate over residues 269-287; it reads QAAEAEPEPVEEYTEQNEV. Phosphoserine is present on residues serine 333 and serine 341. A G3BP1-binding region spans residues 358–379; sequence QDLMAQMQGPYNFIQDSMLDFE. Positions 415-452 are enriched in polar residues; it reads LAQPNQVSVQPEATQVPLVSSTSEGYTASQPLYQPSHA. Disordered regions lie at residues 415–459, 473–497, 521–559, and 571–708; these read LAQP…RPQK, TDQTTASSSLPAASQPQVFQAGTSK, NAPVPPVNEPETLKQQNQYQASYNQSFSSQPHQVEQTEL, and YHGS…QQVN. Low complexity-rich tracts occupy residues 475-489 and 535-559; these read QTTASSSLPAASQPQ and QQNQYQASYNQSFSSQPHQVEQTEL. Polar residues predominate over residues 572-603; the sequence is HGSQDQPHQVTGNHQQPPQQNTGFPRSNQPYY. Tyrosine 623 carries the post-translational modification Phosphotyrosine. 2 positions are modified to omega-N-methylarginine: arginine 624 and arginine 631. Phosphotyrosine is present on residues tyrosine 634 and tyrosine 637. Arginine 638 carries the omega-N-methylarginine modification. Positions 640–656 are enriched in polar residues; sequence SFSTNTPNSGYTQSQFS. Residues serine 642 and serine 648 are each glycosylated (O-linked (GlcNAc) serine). A phosphotyrosine mark is found at tyrosine 650, tyrosine 661, tyrosine 664, and tyrosine 669. 2 stretches are compositionally biased toward low complexity: residues 675–685 and 696–708; these read RGSGQSGPRGA and NRGMPQMNTQQVN. Position 697 is an asymmetric dimethylarginine; alternate (arginine 697). Position 697 is an omega-N-methylarginine; alternate (arginine 697).

This sequence belongs to the caprin family. May form homomultimers. Interacts with G3BP1; interaction is direct and promotes stress granule formation. Interacts with G3BP2; interaction is direct and promotes stress granule formation. Interacts with PQBP1. Interacts with DDX3X. Interacts (when phosphorylated by EPHA4) with FMR1; interaction with FMR1 promotes formation of a membraneless compartment. In terms of processing, tyrosine phosphorylation by EPHA4 promotes interaction with FMR1 and liquid-liquid phase separation (LLPS) for the formation of a membraneless compartment that concentrates mRNAs with associated regulatory factors. Post-translationally, O-glycosylated (O-GlcNAcylated), in a cell cycle-dependent manner. O-glycosylation by OGT inhibit ability to undergo liquid-liquid phase separation (LLPS).

It localises to the cytoplasm. The protein localises to the cytoplasmic ribonucleoprotein granule. The protein resides in the cytosol. It is found in the cell projection. Its subcellular location is the dendrite. It localises to the lamellipodium. Its activity is regulated as follows. Ability to mediate liquid-liquid phase separation is regulated by ATP: moderate concentrations of ATP enhance phase separation, whereas high concentrations of ATP lead to inhibition of phase separation. In terms of biological role, mRNA-binding protein that acts as a regulator of mRNAs transport, translation and/or stability, and which is involved in neurogenesis, synaptic plasticity in neurons and cell proliferation and migration in multiple cell types. Plays an essential role in cytoplasmic stress granule formation. Acts as an mRNA regulator by mediating formation of some phase-separated membraneless compartment: undergoes liquid-liquid phase separation upon binding to target mRNAs, leading to assemble mRNAs into cytoplasmic ribonucleoprotein granules that concentrate mRNAs with associated regulatory factors. Undergoes liquid-liquid phase separation following phosphorylation and interaction with FMR1, promoting formation of cytoplasmic ribonucleoprotein granules that concentrate mRNAs with factors that inhibit translation and mediate deadenylation of target mRNAs. In these cytoplasmic ribonucleoprotein granules, CAPRIN1 mediates recruitment of CNOT7 deadenylase, leading to mRNA deadenylation and degradation. Binds directly and selectively to MYC and CCND2 mRNAs. In neuronal cells, directly binds to several mRNAs associated with RNA granules, including BDNF, CAMK2A, CREB1, MAP2, NTRK2 mRNAs, as well as to GRIN1 and KPNB1 mRNAs, but not to rRNAs. The protein is Caprin-1 (CAPRIN1) of Bos taurus (Bovine).